The chain runs to 513 residues: ATP synthase subunit alpha (513 aa).

Gly-169–Thr-176 provides a ligand contact to ATP.

This sequence belongs to the ATPase alpha/beta chains family. F-type ATPases have 2 components, CF(1) - the catalytic core - and CF(0) - the membrane proton channel. CF(1) has five subunits: alpha(3), beta(3), gamma(1), delta(1), epsilon(1). CF(0) has three main subunits: a(1), b(2) and c(9-12). The alpha and beta chains form an alternating ring which encloses part of the gamma chain. CF(1) is attached to CF(0) by a central stalk formed by the gamma and epsilon chains, while a peripheral stalk is formed by the delta and b chains.

The protein localises to the cell inner membrane. The catalysed reaction is ATP + H2O + 4 H(+)(in) = ADP + phosphate + 5 H(+)(out). Its function is as follows. Produces ATP from ADP in the presence of a proton gradient across the membrane. The alpha chain is a regulatory subunit. This chain is ATP synthase subunit alpha, found in Shewanella sp. (strain ANA-3).